A 142-amino-acid chain; its full sequence is Nucleoside diphosphate kinase (142 aa).

ATP is bound by residues Lys11, Phe59, Arg87, Thr93, Arg104, and Asn114. His117 (pros-phosphohistidine intermediate) is an active-site residue.

Belongs to the NDK family. In terms of assembly, homotetramer. Requires Mg(2+) as cofactor.

It localises to the cytoplasm. It carries out the reaction a 2'-deoxyribonucleoside 5'-diphosphate + ATP = a 2'-deoxyribonucleoside 5'-triphosphate + ADP. The catalysed reaction is a ribonucleoside 5'-diphosphate + ATP = a ribonucleoside 5'-triphosphate + ADP. Its function is as follows. Major role in the synthesis of nucleoside triphosphates other than ATP. The ATP gamma phosphate is transferred to the NDP beta phosphate via a ping-pong mechanism, using a phosphorylated active-site intermediate. The protein is Nucleoside diphosphate kinase of Aeromonas salmonicida (strain A449).